The following is a 381-amino-acid chain: ELMO domain-containing protein 3 (381 aa).

The interval 1 to 31 (MNEKSCSFHSKEELRDGQGERLSAGYSPSYD) is disordered. Residues 9 to 19 (HSKEELRDGQG) are compositionally biased toward basic and acidic residues. In terms of domain architecture, ELMO spans 170-324 (VHGRVLQTIY…ELEVLAKKSP (155 aa)).

As to expression, both isoform 1 and isoform 6 are widely expressed.

It localises to the cell projection. It is found in the stereocilium. The protein localises to the kinocilium. The protein resides in the cytoplasm. Its subcellular location is the cytoskeleton. Acts as a GTPase-activating protein (GAP) for ARL2 with low specific activity. The sequence is that of ELMO domain-containing protein 3 (ELMOD3) from Homo sapiens (Human).